The following is a 399-amino-acid chain: MHNLQVRRHYAALKGFYLFAFLGTGSIIPLLSMYLTKEQHLSGSQVGLIMSLGPIVMIFFQPFWGMLSDYTQKTKGLLAVCTSITGIIGLAYIAFDSFPLFILIAACFAAFQSTIIPLSDSISLRYTQETNGNYGGIRLFGSLGFGVAVFAMGQVTNQLYPIHVIFIFGCAFLCIAAILASQVPGQQKTTKVNIRKGFRELISNKTFLIFMIITFTTFAPNLANNTYFSLFLDKSGASLSAIGILFFIGVISEIPFMRFAQTFIDKMGLLNVIMLSGGVSLFRWALYFTAPSLWIIYATVFLQGVAIGLFIPAALQYVKKITPRHVEATALTMYAAIGNGFGNWFCTFAGGYIFDYVSIFAVYLLFGILSIAGFGLTLYLMKAEKNKHTLHQPAVTFKP.

Residues Met-1–Arg-8 are Cytoplasmic-facing. The chain crosses the membrane as a helical span at residues His-9 to Leu-35. Residues Thr-36–Ser-42 are Extracellular-facing. The helical transmembrane segment at Gly-43–Thr-71 threads the bilayer. At Gln-72–Lys-75 the chain is on the cytoplasmic side. The helical transmembrane segment at Gly-76–Phe-101 threads the bilayer. Residues Ile-102–Ala-105 are Extracellular-facing. Residues Ala-106–Ser-123 form a helical membrane-spanning segment. The Cytoplasmic segment spans residues Leu-124 to Tyr-134. A helical membrane pass occupies residues Gly-135–Asn-157. The Extracellular segment spans residues Gln-158–Tyr-160. A helical membrane pass occupies residues Pro-161–Ala-180. Topologically, residues Ser-181–Phe-210 are cytoplasmic. The chain crosses the membrane as a helical span at residues Met-211–Leu-230. The Extracellular segment spans residues Phe-231–Lys-234. The chain crosses the membrane as a helical span at residues Ser-235 to Phe-259. At Ala-260–Leu-269 the chain is on the cytoplasmic side. The helical transmembrane segment at Leu-270 to Thr-289 threads the bilayer. The Extracellular segment spans residues Ala-290–Ser-292. The chain crosses the membrane as a helical span at residues Leu-293 to Leu-315. Topologically, residues Gln-316–Glu-327 are cytoplasmic. A helical membrane pass occupies residues Ala-328–Asp-355. The Extracellular portion of the chain corresponds to Tyr-356–Ser-358. A helical transmembrane segment spans residues Ile-359–Tyr-379. Residues Leu-380–Pro-399 are Cytoplasmic-facing.

It belongs to the major facilitator superfamily.

It is found in the cell membrane. This is an uncharacterized protein from Bacillus subtilis (strain 168).